Here is a 111-residue protein sequence, read N- to C-terminus: Nucleoid-associated protein lhv_0401 (111 aa).

The protein belongs to the YbaB/EbfC family. Homodimer.

The protein localises to the cytoplasm. It localises to the nucleoid. In terms of biological role, binds to DNA and alters its conformation. May be involved in regulation of gene expression, nucleoid organization and DNA protection. This is Nucleoid-associated protein lhv_0401 from Lactobacillus helveticus (strain DPC 4571).